A 159-amino-acid chain; its full sequence is uncharacterized protein (159 aa).

One can recognise an N-acetyltransferase domain in the interval 7–151; it reads LLINYKTLEE…NPLIWEPAHI (145 aa).

This is an uncharacterized protein from Bacillus pumilus (strain SAFR-032).